Here is a 303-residue protein sequence, read N- to C-terminus: GPN-loop GTPase 2 (303 aa).

29-34 is a GTP binding site; that stretch reads GSGKST. Residues 85-87 carry the Gly-Pro-Asn (GPN)-loop; involved in dimer interface motif; sequence GPN. A GTP-binding site is contributed by 187–190; sequence SKMD.

It belongs to the GPN-loop GTPase family. As to quaternary structure, heterodimers with gpn1 or gpn3. Binds to RNA polymerase II (RNAPII).

Small GTPase required for proper localization of RNA polymerase II and III (RNAPII and RNAPIII). May act at an RNAP assembly step prior to nuclear import. In Xenopus tropicalis (Western clawed frog), this protein is GPN-loop GTPase 2.